Consider the following 141-residue polypeptide: Mite group 2 allergen Lep d 2 (141 aa).

The first 16 residues, 1 to 16, serve as a signal peptide directing secretion; that stretch reads MMKFIALFALVAVASA. 3 cysteine pairs are disulfide-bonded: Cys24–Cys133, Cys37–Cys42, and Cys88–Cys93. A run of 3 repeats spans residues 64–65, 68–69, and 72–73. A 3 X 2 AA repeats of K-V region spans residues 64 to 73; that stretch reads KVTIKVLAKV.

This sequence belongs to the NPC2 family. Monomer.

The protein resides in the secreted. This is Mite group 2 allergen Lep d 2 from Lepidoglyphus destructor (Storage mite).